Consider the following 355-residue polypeptide: Putative GPI-anchor transamidase (355 aa).

The first 24 residues, 1–24, serve as a signal peptide directing secretion; that stretch reads MFNIMLVKFVVIFALILASCRVEA. Catalysis depends on residues histidine 165 and cysteine 207.

Belongs to the peptidase C13 family.

It participates in glycolipid biosynthesis; glycosylphosphatidylinositol-anchor biosynthesis. Functionally, mediates GPI anchoring in the endoplasmic reticulum, by replacing a protein's C-terminal GPI attachment signal peptide with a pre-assembled GPI. During this transamidation reaction, the GPI transamidase forms a carbonyl intermediate with the substrate protein. The polypeptide is Putative GPI-anchor transamidase (Drosophila melanogaster (Fruit fly)).